We begin with the raw amino-acid sequence, 257 residues long: AN1-type zinc finger protein 2B (257 aa).

2 AN1-type zinc fingers span residues 4–52 and 94–142; these read PDLG…QKDI and KIFT…HPTS. Positions 10, 15, 25, 28, 33, 36, 42, 44, 100, 105, 115, 118, 123, 126, 132, and 134 each coordinate Zn(2+). The interval 141-151 is VCP/p97-interacting motif (VIM); sequence TSRAGLAAISR. A disordered region spans residues 153–187; that stretch reads QGLASTSTVPSPSRTLPSSSSPSRATPQLPPRTTS. Residues 156–179 show a composition bias toward low complexity; it reads ASTSTVPSPSRTLPSSSSPSRATP. Residues Ser-163, Ser-173, and Ser-187 each carry the phosphoserine modification. 2 consecutive UIM domains span residues 197-216 and 221-240; these read SEDEALQRALELSLAEAKPQ and QEEEDLALAQALSASEAEYQ. Position 254 is a cysteine methyl ester (Cys-254). Cys-254 is lipidated: S-geranylgeranyl cysteine. Positions 254–257 match the CAAX motif motif; it reads CSLC. A propeptide spans 255–257 (removed in mature form); sequence SLC.

Binds 'Lys-48'-linked polyubiquitin chains of ubiquitinated proteins. Associates with the proteasome complex; upon exposure to arsenite. Interacts (via VIM motif) with VCP; the interaction is direct. Interacts with BAG6. Interacts with IGF1R (nascent precursor form). Interacts with DERL1, FAF2, NPLOC4 and UFD1; probably through VCP. In terms of processing, phosphorylated by MAPK14. Phosphorylation has no effect on association with the proteasome complex.

The protein resides in the endoplasmic reticulum membrane. Its function is as follows. Plays a role in protein homeostasis by regulating both the translocation and the ubiquitin-mediated proteasomal degradation of nascent proteins at the endoplasmic reticulum. It is involved in the regulation of signal-mediated translocation of proteins into the endoplasmic reticulum. It also plays a role in the ubiquitin-mediated proteasomal degradation of proteins for which signal-mediated translocation to the endoplasmic reticulum has failed. May therefore function in the endoplasmic reticulum stress-induced pre-emptive quality control, a mechanism that selectively attenuates the translocation of newly synthesized proteins into the endoplasmic reticulum and reroutes them to the cytosol for proteasomal degradation. By controlling the steady-state expression of the IGF1R receptor, indirectly regulates the insulin-like growth factor receptor signaling pathway. The polypeptide is AN1-type zinc finger protein 2B (Rattus norvegicus (Rat)).